The primary structure comprises 504 residues: Maturase K (504 aa).

It belongs to the intron maturase 2 family. MatK subfamily.

The protein localises to the plastid. Its subcellular location is the chloroplast. Usually encoded in the trnK tRNA gene intron. Probably assists in splicing its own and other chloroplast group II introns. This chain is Maturase K, found in Nepenthes distillatoria (Pitcher plant).